Consider the following 71-residue polypeptide: Large ribosomal subunit protein uL29 (71 aa).

It belongs to the universal ribosomal protein uL29 family.

This Halobacterium salinarum (strain ATCC 700922 / JCM 11081 / NRC-1) (Halobacterium halobium) protein is Large ribosomal subunit protein uL29 (rpl29).